Consider the following 303-residue polypeptide: N-acetyl-D-glucosamine kinase (303 aa).

Residues 4–11 (GFDIGGTK) and 133–140 (GVGGGLVL) contribute to the ATP site. The Zn(2+) site is built by H157, C177, C179, and C184.

The protein belongs to the ROK (NagC/XylR) family. NagK subfamily.

The catalysed reaction is N-acetyl-D-glucosamine + ATP = N-acetyl-D-glucosamine 6-phosphate + ADP + H(+). It functions in the pathway cell wall biogenesis; peptidoglycan recycling. Catalyzes the phosphorylation of N-acetyl-D-glucosamine (GlcNAc) derived from cell-wall degradation, yielding GlcNAc-6-P. This chain is N-acetyl-D-glucosamine kinase, found in Salmonella newport (strain SL254).